A 65-amino-acid chain; its full sequence is MPKIKTNRAAAKRFRKTASGKYKAGHANRSHILTKKATKRKRNLRQQNHVRAEDAGRLDRMLPYL.

A disordered region spans residues 1-65; the sequence is MPKIKTNRAA…GRLDRMLPYL (65 aa). Over residues 10–44 the composition is skewed to basic residues; that stretch reads AAKRFRKTASGKYKAGHANRSHILTKKATKRKRNL. The span at 50–65 shows a compositional bias: basic and acidic residues; sequence VRAEDAGRLDRMLPYL.

The protein belongs to the bacterial ribosomal protein bL35 family.

The polypeptide is Large ribosomal subunit protein bL35 (Xylella fastidiosa (strain M23)).